Consider the following 379-residue polypeptide: Queuine tRNA-ribosyltransferase (379 aa).

The Proton acceptor role is filled by Asp-94. Residues 94 to 98 (DSGGF), Asp-148, Gln-191, and Gly-218 each bind substrate. The RNA binding stretch occupies residues 249–255 (GVGSPDS). Asp-268 functions as the Nucleophile in the catalytic mechanism. Positions 273 to 277 (TRIAR) are RNA binding; important for wobble base 34 recognition. Zn(2+) is bound by residues Cys-306, Cys-308, Cys-311, and His-337.

Belongs to the queuine tRNA-ribosyltransferase family. As to quaternary structure, homodimer. Within each dimer, one monomer is responsible for RNA recognition and catalysis, while the other monomer binds to the replacement base PreQ1. Zn(2+) serves as cofactor.

It carries out the reaction 7-aminomethyl-7-carbaguanine + guanosine(34) in tRNA = 7-aminomethyl-7-carbaguanosine(34) in tRNA + guanine. It participates in tRNA modification; tRNA-queuosine biosynthesis. Its function is as follows. Catalyzes the base-exchange of a guanine (G) residue with the queuine precursor 7-aminomethyl-7-deazaguanine (PreQ1) at position 34 (anticodon wobble position) in tRNAs with GU(N) anticodons (tRNA-Asp, -Asn, -His and -Tyr). Catalysis occurs through a double-displacement mechanism. The nucleophile active site attacks the C1' of nucleotide 34 to detach the guanine base from the RNA, forming a covalent enzyme-RNA intermediate. The proton acceptor active site deprotonates the incoming PreQ1, allowing a nucleophilic attack on the C1' of the ribose to form the product. After dissociation, two additional enzymatic reactions on the tRNA convert PreQ1 to queuine (Q), resulting in the hypermodified nucleoside queuosine (7-(((4,5-cis-dihydroxy-2-cyclopenten-1-yl)amino)methyl)-7-deazaguanosine). The sequence is that of Queuine tRNA-ribosyltransferase from Bacillus cytotoxicus (strain DSM 22905 / CIP 110041 / 391-98 / NVH 391-98).